Reading from the N-terminus, the 92-residue chain is Tachykinin-2 (92 aa).

Positions 1-22 are cleaved as a signal peptide; sequence MIRVGLILCCIFIVGVFEASSA. Residues 23–37 constitute a propeptide that is removed on maturation; sequence DDILTAHNLIKRSEV. Position 49 is a methionine amide (Met-49). The propeptide occupies 52 to 92; it reads SEELTRRLIQHPGSMSETSKRGPPKKGDFNPNELKPESNIC. Positions 61–92 are disordered; the sequence is QHPGSMSETSKRGPPKKGDFNPNELKPESNIC.

Belongs to the tachykinin family. Expressed in the posterior salivary gland and more specifically in the mucus-secreting gland cells.

It localises to the secreted. Tachykinins are active peptides which excite neurons, evoke behavioral responses, are potent vasodilators and secretagogues, and contract (directly or indirectly) many smooth muscles. The protein is Tachykinin-2 of Octopus vulgaris (Common octopus).